The sequence spans 352 residues: Small ribosomal subunit biogenesis GTPase RsgA 2 (352 aa).

Residues 100–257 form the CP-type G domain; the sequence is RQDGQIIATN…VIDTPGMREL (158 aa). Residues 147–150 and 199–207 contribute to the GTP site; these read TKAD and GSSGVGKST. The Zn(2+) site is built by C278, C283, H285, and C291.

The protein belongs to the TRAFAC class YlqF/YawG GTPase family. RsgA subfamily. Monomer. Associates with 30S ribosomal subunit, binds 16S rRNA. Zn(2+) is required as a cofactor.

It localises to the cytoplasm. One of several proteins that assist in the late maturation steps of the functional core of the 30S ribosomal subunit. Helps release RbfA from mature subunits. May play a role in the assembly of ribosomal proteins into the subunit. Circularly permuted GTPase that catalyzes slow GTP hydrolysis, GTPase activity is stimulated by the 30S ribosomal subunit. This chain is Small ribosomal subunit biogenesis GTPase RsgA 2, found in Lactiplantibacillus plantarum (strain ATCC BAA-793 / NCIMB 8826 / WCFS1) (Lactobacillus plantarum).